We begin with the raw amino-acid sequence, 150 residues long: uncharacterized protein (150 aa).

This sequence belongs to the IIV-6 391R family.

This is an uncharacterized protein from Invertebrate iridescent virus 3 (IIV-3).